The sequence spans 240 residues: Triosephosphate isomerase (240 aa).

6 to 8 (NLK) is a substrate binding site. H88 (electrophile) is an active-site residue. E157 acts as the Proton acceptor in catalysis. Residues G163 and S193 each contribute to the substrate site.

This sequence belongs to the triosephosphate isomerase family. In terms of assembly, homodimer.

The protein localises to the cytoplasm. It catalyses the reaction D-glyceraldehyde 3-phosphate = dihydroxyacetone phosphate. It functions in the pathway carbohydrate biosynthesis; gluconeogenesis. It participates in carbohydrate degradation; glycolysis; D-glyceraldehyde 3-phosphate from glycerone phosphate: step 1/1. Involved in the gluconeogenesis. Catalyzes stereospecifically the conversion of dihydroxyacetone phosphate (DHAP) to D-glyceraldehyde-3-phosphate (G3P). The polypeptide is Triosephosphate isomerase (Sulfurimonas denitrificans (strain ATCC 33889 / DSM 1251) (Thiomicrospira denitrificans (strain ATCC 33889 / DSM 1251))).